The primary structure comprises 534 residues: Kelch repeat and BTB domain-containing protein 4 (534 aa).

A BTB domain is found at 61-128 (ADVTISVEGR…IYHGTVKLRA (68 aa)). One can recognise a BACK domain in the interval 163 to 255 (CLQVMWLADR…SLKEIGENVH (93 aa)). Kelch repeat units follow at residues 255–301 (HIYL…KHGG), 302–344 (DLYV…SVPG), 347–394 (AIYS…NLNG), 396–446 (IYLL…VHKD), and 448–497 (VFIV…VFRD).

Component of the BCR(KBTBD4) E3 ubiquitin ligase complex, at least composed of CUL3, KBTBD4 and RBX1.

In terms of biological role, substrate-specific adapter of a BCR (BTB-CUL3-RBX1) E3 ubiquitin ligase complex which targets CoREST corepressor complex components RCOR1, KDM1A/LSD1 and HDAC2 for proteasomal degradation. RCOR1 is likely to be the primary target while degradation of KDM1A and HDAC2 is likely due to their association with RCOR1. Also targets RCOR3, MIER2 and MIER3 for proteasomal degradation as well as associated proteins ZNF217 and RREB1. Degradation is dependent on the presence of an ELM2 domain in the target proteins. The polypeptide is Kelch repeat and BTB domain-containing protein 4 (Kbtbd4) (Mus musculus (Mouse)).